We begin with the raw amino-acid sequence, 368 residues long: Quinolinate synthase (368 aa).

Iminosuccinate is bound by residues His-46 and Ser-63. Cys-110 serves as a coordination point for [4Fe-4S] cluster. Residues 141–143 (YVN) and Ser-162 contribute to the iminosuccinate site. Residue Cys-230 coordinates [4Fe-4S] cluster. Residues 256–258 (HPE) and Thr-273 each bind iminosuccinate. Residue Cys-320 participates in [4Fe-4S] cluster binding.

Belongs to the quinolinate synthase family. Type 3 subfamily. [4Fe-4S] cluster is required as a cofactor.

The protein resides in the cytoplasm. It catalyses the reaction iminosuccinate + dihydroxyacetone phosphate = quinolinate + phosphate + 2 H2O + H(+). It participates in cofactor biosynthesis; NAD(+) biosynthesis; quinolinate from iminoaspartate: step 1/1. Catalyzes the condensation of iminoaspartate with dihydroxyacetone phosphate to form quinolinate. This chain is Quinolinate synthase, found in Bacillus thuringiensis subsp. konkukian (strain 97-27).